Reading from the N-terminus, the 328-residue chain is Ferredoxin--NADP reductase 1 (328 aa).

The FAD site is built by Asp28, Gln36, Tyr41, Ala81, Ile116, Asp277, and Ser320.

Belongs to the ferredoxin--NADP reductase type 2 family. Homodimer. FAD serves as cofactor.

The catalysed reaction is 2 reduced [2Fe-2S]-[ferredoxin] + NADP(+) + H(+) = 2 oxidized [2Fe-2S]-[ferredoxin] + NADPH. The polypeptide is Ferredoxin--NADP reductase 1 (Sulfolobus acidocaldarius (strain ATCC 33909 / DSM 639 / JCM 8929 / NBRC 15157 / NCIMB 11770)).